A 136-amino-acid polypeptide reads, in one-letter code: Replication enhancer (136 aa).

Belongs to the geminiviridae replication enhancer protein family. As to quaternary structure, homooligomer. Interacts with the replication-associated protein (REP). Interacts with host proliferating cell nuclear antigen (PCNA). Interacts with host retinoblastoma-related protein 1 (RBR1), and may thereby deregulate the host cell cycle. Oligomerization and interaction with PCNA are necessary for optimal replication enhancement.

Functionally, increases viral DNA accumulation. Enhances infectivity and symptom expression. This is Replication enhancer from Beet curly top virus (strain California/Logan) (BCTV).